Here is a 391-residue protein sequence, read N- to C-terminus: MAKSKFERTKPHVNIGTIGHVDHGKTSLTAAITKYFGEFKAYDQIDAAPEERARGITISTAHVEYETEKRHYAHVDCPGHADYVKNMITGAAQMDGAILVVSAADGPMPQTREHILLARQVGVPAIVVFLNKVDQVDDAELLELVELEIRELLSKYDFPGDDIPIVKGSALAALEDKDKSIGEDAVRLLMSEVDNYIPTPERPVDQPFLLPIEDVFSISGRGTVVTGRVERGVIKVGEEIEIIGIRPTSKTTVTGVEMFRKLLDQGQAGDNIGALLRGVDREGIERGQVLAKPGSVTPHTRFKAEAYILTKDEGGRHTPFFTNYRPQFYFRTTDVTGIVTLPEGIEMVMPGDNVAMDVSLIVPIAMEEKLRFAIREGGRTVGAGIVSKIIE.

The tr-type G domain occupies 10–201 (KPHVNIGTIG…EVDNYIPTPE (192 aa)). Residues 19–26 (GHVDHGKT) are G1. 19-26 (GHVDHGKT) contacts GTP. Threonine 26 serves as a coordination point for Mg(2+). The G2 stretch occupies residues 55-59 (GITIS). The G3 stretch occupies residues 76–79 (DCPG). Residues 76–80 (DCPGH) and 131–134 (NKVD) each bind GTP. A G4 region spans residues 131-134 (NKVD). Residues 169–171 (SAL) are G5.

The protein belongs to the TRAFAC class translation factor GTPase superfamily. Classic translation factor GTPase family. EF-Tu/EF-1A subfamily. As to quaternary structure, monomer.

It localises to the cytoplasm. It carries out the reaction GTP + H2O = GDP + phosphate + H(+). Its function is as follows. GTP hydrolase that promotes the GTP-dependent binding of aminoacyl-tRNA to the A-site of ribosomes during protein biosynthesis. This is Elongation factor Tu 1 from Bartonella quintana (strain Toulouse) (Rochalimaea quintana).